A 187-amino-acid chain; its full sequence is TATA-box-binding protein (187 aa).

Tandem repeats lie at residues 10 to 86 (IENV…FDKL) and 101 to 179 (VQNI…VSRL).

It belongs to the TBP family.

Its function is as follows. General factor that plays a role in the activation of archaeal genes transcribed by RNA polymerase. Binds specifically to the TATA box promoter element which lies close to the position of transcription initiation. The protein is TATA-box-binding protein of Natronomonas pharaonis (strain ATCC 35678 / DSM 2160 / CIP 103997 / JCM 8858 / NBRC 14720 / NCIMB 2260 / Gabara) (Halobacterium pharaonis).